We begin with the raw amino-acid sequence, 735 residues long: Lebercilin-like protein (735 aa).

Disordered regions lie at residues 12 to 54 (TEAH…NGSV) and 91 to 115 (EKPL…RGQK). The span at 43 to 53 (QSQNSQASNGS) shows a compositional bias: low complexity. The stretch at 205–335 (TAKHQNEVKN…QQKLKEKDRE (131 aa)) forms a coiled coil. 4 disordered regions span residues 356–379 (YPKV…NMRH), 473–597 (SKEV…PRKH), 632–657 (KHRS…AGAR), and 685–735 (GRAG…KTVV). Positions 487–525 (TPRRPKENKEDQEKRAIPAEAEPTAKESEAHKDAEDKAL) are enriched in basic and acidic residues. Residues 528–541 (AAGNAGDAGDAGDA) show a composition bias toward low complexity. 3 stretches are compositionally biased toward basic and acidic residues: residues 542-553 (GNDREVVGEHKV), 573-588 (EVHG…EPGR), and 632-641 (KHRSEQELRL). The segment covering 689-707 (SSDSEAVSKSPQTGPQASA) has biased composition (polar residues).

The protein belongs to the LCA5 family.

The chain is Lebercilin-like protein from Mus musculus (Mouse).